The chain runs to 511 residues: GMP synthase [glutamine-hydrolyzing] (511 aa).

A Glutamine amidotransferase type-1 domain is found at 3–193 (KILILDFGGQ…VYSICDVAGD (191 aa)). C80 (nucleophile) is an active-site residue. Catalysis depends on residues H167 and E169. The region spanning 194-384 (WEPKNIKLEK…LDIPYQNVYR (191 aa)) is the GMPS ATP-PPase domain. 221–227 (SGGVDSL) contributes to the ATP binding site.

As to quaternary structure, homodimer.

The enzyme catalyses XMP + L-glutamine + ATP + H2O = GMP + L-glutamate + AMP + diphosphate + 2 H(+). It functions in the pathway purine metabolism; GMP biosynthesis; GMP from XMP (L-Gln route): step 1/1. Catalyzes the synthesis of GMP from XMP. The polypeptide is GMP synthase [glutamine-hydrolyzing] (Malacoplasma penetrans (strain HF-2) (Mycoplasma penetrans)).